The sequence spans 80 residues: Exodeoxyribonuclease 7 small subunit (80 aa).

Belongs to the XseB family. In terms of assembly, heterooligomer composed of large and small subunits.

The protein resides in the cytoplasm. The enzyme catalyses Exonucleolytic cleavage in either 5'- to 3'- or 3'- to 5'-direction to yield nucleoside 5'-phosphates.. Bidirectionally degrades single-stranded DNA into large acid-insoluble oligonucleotides, which are then degraded further into small acid-soluble oligonucleotides. The polypeptide is Exodeoxyribonuclease 7 small subunit (Pseudomonas entomophila (strain L48)).